The sequence spans 332 residues: GLIPR1-like protein 2 (332 aa).

The SCP domain occupies 57–191 (LHNELRGTVF…THAALFICNY (135 aa)). N-linked (GlcNAc...) asparagine glycosylation occurs at Asn-145. The chain crosses the membrane as a helical span at residues 253 to 273 (IFILFLRVASLLLCVIVVLIV). A disordered region spans residues 293 to 332 (EGKTEVEIVMEEGEGEGEGGEGEGEGEEKEEEEMLEEDEQ). Residues 300-332 (IVMEEGEGEGEGGEGEGEGEEKEEEEMLEEDEQ) show a composition bias toward acidic residues.

This sequence belongs to the CRISP family.

It localises to the membrane. This chain is GLIPR1-like protein 2 (Glipr1l2), found in Mus musculus (Mouse).